The primary structure comprises 206 residues: Thiamine-phosphate synthase (206 aa).

Residues 37–41 (QYRNK) and N69 contribute to the 4-amino-2-methyl-5-(diphosphooxymethyl)pyrimidine site. Positions 70 and 89 each coordinate Mg(2+). A 4-amino-2-methyl-5-(diphosphooxymethyl)pyrimidine-binding site is contributed by S108. 135-137 (SST) provides a ligand contact to 2-[(2R,5Z)-2-carboxy-4-methylthiazol-5(2H)-ylidene]ethyl phosphate. K138 contributes to the 4-amino-2-methyl-5-(diphosphooxymethyl)pyrimidine binding site. 2-[(2R,5Z)-2-carboxy-4-methylthiazol-5(2H)-ylidene]ethyl phosphate-binding positions include G165 and 185 to 186 (IS).

Belongs to the thiamine-phosphate synthase family. It depends on Mg(2+) as a cofactor.

The enzyme catalyses 2-[(2R,5Z)-2-carboxy-4-methylthiazol-5(2H)-ylidene]ethyl phosphate + 4-amino-2-methyl-5-(diphosphooxymethyl)pyrimidine + 2 H(+) = thiamine phosphate + CO2 + diphosphate. The catalysed reaction is 2-(2-carboxy-4-methylthiazol-5-yl)ethyl phosphate + 4-amino-2-methyl-5-(diphosphooxymethyl)pyrimidine + 2 H(+) = thiamine phosphate + CO2 + diphosphate. It catalyses the reaction 4-methyl-5-(2-phosphooxyethyl)-thiazole + 4-amino-2-methyl-5-(diphosphooxymethyl)pyrimidine + H(+) = thiamine phosphate + diphosphate. Its pathway is cofactor biosynthesis; thiamine diphosphate biosynthesis; thiamine phosphate from 4-amino-2-methyl-5-diphosphomethylpyrimidine and 4-methyl-5-(2-phosphoethyl)-thiazole: step 1/1. In terms of biological role, condenses 4-methyl-5-(beta-hydroxyethyl)thiazole monophosphate (THZ-P) and 2-methyl-4-amino-5-hydroxymethyl pyrimidine pyrophosphate (HMP-PP) to form thiamine monophosphate (TMP). In Azoarcus sp. (strain BH72), this protein is Thiamine-phosphate synthase.